The primary structure comprises 77 residues: Acyl carrier protein (77 aa).

Residues 2–77 (SSIDKRIKEI…DAIDYITDHT (76 aa)) form the Carrier domain. S37 carries the post-translational modification O-(pantetheine 4'-phosphoryl)serine.

Belongs to the acyl carrier protein (ACP) family. In terms of processing, 4'-phosphopantetheine is transferred from CoA to a specific serine of apo-ACP by AcpS. This modification is essential for activity because fatty acids are bound in thioester linkage to the sulfhydryl of the prosthetic group.

It localises to the cytoplasm. Its pathway is lipid metabolism; fatty acid biosynthesis. Functionally, carrier of the growing fatty acid chain in fatty acid biosynthesis. This is Acyl carrier protein from Geotalea daltonii (strain DSM 22248 / JCM 15807 / FRC-32) (Geobacter daltonii).